We begin with the raw amino-acid sequence, 274 residues long: Dermonecrotic toxin SdSicTox-betaIIB1bv (274 aa).

Residue His-5 is part of the active site. Glu-25 and Asp-27 together coordinate Mg(2+). Catalysis depends on His-41, which acts as the Nucleophile. 2 disulfides stabilise this stretch: Cys-45/Cys-51 and Cys-47/Cys-190. Asp-85 contributes to the Mg(2+) binding site.

Belongs to the arthropod phospholipase D family. Class II subfamily. It depends on Mg(2+) as a cofactor. In terms of tissue distribution, expressed by the venom gland.

Its subcellular location is the secreted. It carries out the reaction an N-(acyl)-sphingosylphosphocholine = an N-(acyl)-sphingosyl-1,3-cyclic phosphate + choline. The enzyme catalyses an N-(acyl)-sphingosylphosphoethanolamine = an N-(acyl)-sphingosyl-1,3-cyclic phosphate + ethanolamine. It catalyses the reaction a 1-acyl-sn-glycero-3-phosphocholine = a 1-acyl-sn-glycero-2,3-cyclic phosphate + choline. The catalysed reaction is a 1-acyl-sn-glycero-3-phosphoethanolamine = a 1-acyl-sn-glycero-2,3-cyclic phosphate + ethanolamine. Dermonecrotic toxins cleave the phosphodiester linkage between the phosphate and headgroup of certain phospholipids (sphingolipid and lysolipid substrates), forming an alcohol (often choline) and a cyclic phosphate. This toxin acts on sphingomyelin (SM). It may also act on ceramide phosphoethanolamine (CPE), lysophosphatidylcholine (LPC) and lysophosphatidylethanolamine (LPE), but not on lysophosphatidylserine (LPS), and lysophosphatidylglycerol (LPG). It acts by transphosphatidylation, releasing exclusively cyclic phosphate products as second products. Induces dermonecrosis, hemolysis, increased vascular permeability, edema, inflammatory response, and platelet aggregation. The polypeptide is Dermonecrotic toxin SdSicTox-betaIIB1bv (Sicarius cf. damarensis (strain GJB-2008) (Six-eyed sand spider)).